We begin with the raw amino-acid sequence, 1239 residues long: Anillin (1239 aa).

Disordered stretches follow at residues 32–67 (CSVP…SGGG), 230–265 (EAPP…RTKQ), 493–621 (FDNQ…MCNG), and 684–716 (GSTQ…NSFS). Residues 53 to 63 (RSRSPGGQSAA) show a composition bias toward low complexity. The interval 126 to 371 (EQAEGGALNP…ENKGTGGQSQ (246 aa)) is interaction with and bundling of F-actin. Basic and acidic residues predominate over residues 252 to 265 (PKKDEVDEASRTKQ). Positions 500-518 (SSVAAQARPPAPAPSRVVR) are enriched in low complexity. Pro residues predominate over residues 519–528 (PMPPPPPPPI). A compositionally biased stretch (basic and acidic residues) spans 551–563 (EDSKRARKSHSDR). Over residues 594-610 (DEEETESCMDESDDQSQ) the composition is skewed to acidic residues. Over residues 699 to 716 (ASRLSLGSKGTTASNSFS) the composition is skewed to polar residues. Phosphoserine is present on serine 712. Position 740 is a phosphothreonine (threonine 740). Residues serine 744 and serine 754 each carry the phosphoserine modification. Position 831 is a phosphothreonine (threonine 831). A coiled-coil region spans residues 834–861 (DDEEMQNAREVNDASQAQDKIKKLLSEV). The 125-residue stretch at 1106 to 1230 (SVEYKGFLTM…WCAYLNKALT (125 aa)) folds into the PH domain.

Interacts with and bundles F-actin. As to expression, accumulates in the ring canals that interconnect cells of the germline cysts in males and the ovarian follicles in females. These structures develop from arrested contractile rings after a specialized cytokinesis in which the closing of the invaginating plasma membrane is incomplete. Also concentrates in the arrested cleavage furrows that initially link the oocyte to its 15 nurse cells in the early egg chamber and is subsequently lost from these furrows as germline cell division is completed.

It localises to the nucleus. It is found in the cytoplasm. Its subcellular location is the cytoskeleton. The protein resides in the cell cortex. The protein localises to the cell projection. It localises to the cilium. It is found in the flagellum. Required for cytokinesis. Essential for the structural integrity of the cleavage furrow and for completion of cleavage furrow ingression and proper formation of the midbody. Required during cellularization of syncytial embryos for the proper formation and function of the furrow canals, the stable inward folds of the plasma membrane which separate the peripheral nuclei. Also required for the formation of the pole cells, the progenitors of the adult germline which are formed by cytokinesis of the cytoplasmic buds at the posterior pole of the syncytial embryo. Essential for embryonic viability. The protein is Anillin (scra) of Drosophila melanogaster (Fruit fly).